The primary structure comprises 62 residues: uncharacterized protein (62 aa).

This is an uncharacterized protein from Bacillus subtilis (strain 168).